The following is a 1404-amino-acid chain: DNA-directed RNA polymerase subunit beta' (1404 aa).

The Zn(2+) site is built by C70, C72, C85, and C88. 3 residues coordinate Mg(2+): D460, D462, and D464. Zn(2+) is bound by residues C814, C889, C896, and C899.

The protein belongs to the RNA polymerase beta' chain family. In terms of assembly, the RNAP catalytic core consists of 2 alpha, 1 beta, 1 beta' and 1 omega subunit. When a sigma factor is associated with the core the holoenzyme is formed, which can initiate transcription. Mg(2+) is required as a cofactor. The cofactor is Zn(2+).

It catalyses the reaction RNA(n) + a ribonucleoside 5'-triphosphate = RNA(n+1) + diphosphate. Its function is as follows. DNA-dependent RNA polymerase catalyzes the transcription of DNA into RNA using the four ribonucleoside triphosphates as substrates. This Xanthomonas axonopodis pv. citri (strain 306) protein is DNA-directed RNA polymerase subunit beta'.